Reading from the N-terminus, the 391-residue chain is Recombination and repair protein (391 aa).

Position 60–67 (60–67 (GPSKSFKS)) interacts with ATP. Over residues 364–374 (KSPESKSKSAA) the composition is skewed to basic and acidic residues. The segment at 364-391 (KSPESKSKSAADLETDLEQLSDMEEFNE) is disordered. The segment covering 376 to 391 (LETDLEQLSDMEEFNE) has biased composition (acidic residues).

This sequence belongs to the RecA family.

Important in genetic recombination, DNA repair, and replication. Possesses pairing and strand-transfer activity. Interacts with dda and gene 32 proteins. This chain is Recombination and repair protein (UVSX), found in Enterobacteria phage T4 (Bacteriophage T4).